Consider the following 112-residue polypeptide: Iron-sulfur cluster assembly protein CyaY (112 aa).

This sequence belongs to the frataxin family.

Functionally, involved in iron-sulfur (Fe-S) cluster assembly. May act as a regulator of Fe-S biogenesis. This chain is Iron-sulfur cluster assembly protein CyaY, found in Delftia acidovorans (strain DSM 14801 / SPH-1).